We begin with the raw amino-acid sequence, 338 residues long: Popeye domain-containing protein 1-A (338 aa).

Residues 1–40 are Extracellular-facing; sequence MTTESIFITTLPMDFNSQFDNITIGLNDNETLCENWREIH. N-linked (GlcNAc...) asparagine glycosylation is found at asparagine 21 and asparagine 29. Residues 41-61 traverse the membrane as a helical segment; sequence HLVFHLANTCFAAGLVIPSTL. Residues 62 to 65 lie on the Cytoplasmic side of the membrane; the sequence is NLHM. The helical transmembrane segment at 66-86 threads the bilayer; sequence LFLRGMLCLGCTFFIIWAVLF. Residues 87-91 lie on the Extracellular side of the membrane; the sequence is RCALD. The chain crosses the membrane as a helical span at residues 92–112; sequence IMIWNATFLSINFMHFVYLVY. The Cytoplasmic segment spans residues 113 to 338; the sequence is KKRPIKIKKE…VGPLSHAVFC (226 aa). The segment at 296 to 317 is disordered; the sequence is TNDNEDGLQNFLRGTSTTSSQR. The segment covering 307 to 317 has biased composition (polar residues); it reads LRGTSTTSSQR.

Belongs to the popeye family. In terms of tissue distribution, expressed in the heart.

Its subcellular location is the lateral cell membrane. It localises to the cell junction. The protein resides in the tight junction. The protein localises to the membrane. Functionally, cell adhesion molecule involved in the establishment and/or maintenance of cell integrity. Plays a role in vamp3-mediated vesicular transport and recycling of different receptor molecules. May be involved in the formation and regulation of the tight junction (TJ) paracellular permeability barrier in epithelial cells. May induce primordial adhesive contact and aggregation of epithelial cells in a Ca(2+)-independent manner. May be involved in epithelial movement during corneal sheet formation and regeneration. May play a role in the regulation of cell shape and movement by modulating the Rho-GTPase activity. May also be involved in striated muscle regeneration and in the regulation of cell spreading. In Xenopus laevis (African clawed frog), this protein is Popeye domain-containing protein 1-A (popdc1-a).